The sequence spans 298 residues: Protoheme IX farnesyltransferase (298 aa).

9 helical membrane passes run 16–36, 45–65, 93–113, 114–134, 141–161, 172–192, 223–243, 244–264, and 277–297; these read VVAL…PDMP, ALGF…NQLL, VFAG…VNVI, TAVL…VYLK, IVIG…AVTG, SLLV…LAIF, VLLA…VFYL, GGAV…LNPP, and IVYL…LPWV.

Belongs to the UbiA prenyltransferase family. Protoheme IX farnesyltransferase subfamily.

The protein resides in the cell inner membrane. It catalyses the reaction heme b + (2E,6E)-farnesyl diphosphate + H2O = Fe(II)-heme o + diphosphate. The protein operates within porphyrin-containing compound metabolism; heme O biosynthesis; heme O from protoheme: step 1/1. Its function is as follows. Converts heme B (protoheme IX) to heme O by substitution of the vinyl group on carbon 2 of heme B porphyrin ring with a hydroxyethyl farnesyl side group. This chain is Protoheme IX farnesyltransferase, found in Xanthomonas oryzae pv. oryzae (strain MAFF 311018).